We begin with the raw amino-acid sequence, 103 residues long: Small ribosomal subunit protein uS10 (103 aa).

It belongs to the universal ribosomal protein uS10 family. Part of the 30S ribosomal subunit.

In terms of biological role, involved in the binding of tRNA to the ribosomes. This chain is Small ribosomal subunit protein uS10, found in Haemophilus ducreyi (strain 35000HP / ATCC 700724).